We begin with the raw amino-acid sequence, 155 residues long: Ribonuclease H (155 aa).

The RNase H type-1 domain maps to 1 to 142 (MLKQVEIFTD…CDELARAAAS (142 aa)). The Mg(2+) site is built by D10, E48, D70, and D134.

The protein belongs to the RNase H family. As to quaternary structure, monomer. Requires Mg(2+) as cofactor.

The protein resides in the cytoplasm. The enzyme catalyses Endonucleolytic cleavage to 5'-phosphomonoester.. In terms of biological role, endonuclease that specifically degrades the RNA of RNA-DNA hybrids. The sequence is that of Ribonuclease H from Klebsiella pneumoniae (strain 342).